We begin with the raw amino-acid sequence, 438 residues long: MKYTDTAPKLFMNTGTKFPRRIIWSMGVLKKSCAKVNADLGLLDKKIADSIIKASDDLIDGKLDDKIVLDVFQTGSGTGLNMNVNEVIAEVASSYSNLKVHPNDHVNFGQSSNDTVPTAIRIAAVAEVTNRLLPALQQIISSLNKKAEEYKDVIKAGRTHLRDALPVTLGQELSAYADAFQHEHEQVMNILEYVKELPIGGTATGTGLNSHPEFQERVINEINRITGLGFKPANRFRAMRLLTDLLLLSGALRNIAVDLYRLGQDIRLMFSGPLTGLNEIDLPTQEEIAGSSIMPGKTNPVTVEATLLISAQVVGLDHANQFASMLGEFELSMGIPLVGYNIVTQVNFISEALEKMSRLVIDGMVANVEKMKRYAESSPSLITIVSPVIGYDKATEIGKKLNKGMSIREALRELGYSDNEINKILDLSKLVKPGFTAK.

Residues 76–78, 101–104, 111–113, and T159 each bind substrate; these read SGT, HPND, and SSN. Residue H160 is the Proton donor/acceptor of the active site. The active site involves S291. Substrate is bound by residues S292 and 297–299; that span reads KTN.

Belongs to the class-II fumarase/aspartase family. Fumarase subfamily. As to quaternary structure, homotetramer.

It localises to the cytoplasm. It catalyses the reaction (S)-malate = fumarate + H2O. It functions in the pathway carbohydrate metabolism; tricarboxylic acid cycle; (S)-malate from fumarate: step 1/1. Functionally, involved in the TCA cycle. Catalyzes the stereospecific interconversion of fumarate to L-malate. The sequence is that of Fumarate hydratase class II from Saccharolobus solfataricus (strain ATCC 35092 / DSM 1617 / JCM 11322 / P2) (Sulfolobus solfataricus).